We begin with the raw amino-acid sequence, 405 residues long: Formate-dependent phosphoribosylglycinamide formyltransferase (405 aa).

Residues 27-28 and Glu87 each bind N(1)-(5-phospho-beta-D-ribosyl)glycinamide; that span reads EL. ATP contacts are provided by residues Arg120, Lys162, 167 to 172, 202 to 205, and Glu210; these read SSGKGQ and EGFI. In terms of domain architecture, ATP-grasp spans 125 to 320; sequence RLAAETLGLP…EFELHARALL (196 aa). Residues Glu279 and Glu291 each coordinate Mg(2+). Residues Asp298, Lys367, and 374-375 contribute to the N(1)-(5-phospho-beta-D-ribosyl)glycinamide site; that span reads RR.

It belongs to the PurK/PurT family. In terms of assembly, homodimer.

The catalysed reaction is N(1)-(5-phospho-beta-D-ribosyl)glycinamide + formate + ATP = N(2)-formyl-N(1)-(5-phospho-beta-D-ribosyl)glycinamide + ADP + phosphate + H(+). It functions in the pathway purine metabolism; IMP biosynthesis via de novo pathway; N(2)-formyl-N(1)-(5-phospho-D-ribosyl)glycinamide from N(1)-(5-phospho-D-ribosyl)glycinamide (formate route): step 1/1. In terms of biological role, involved in the de novo purine biosynthesis. Catalyzes the transfer of formate to 5-phospho-ribosyl-glycinamide (GAR), producing 5-phospho-ribosyl-N-formylglycinamide (FGAR). Formate is provided by PurU via hydrolysis of 10-formyl-tetrahydrofolate. In Bordetella avium (strain 197N), this protein is Formate-dependent phosphoribosylglycinamide formyltransferase.